Here is a 280-residue protein sequence, read N- to C-terminus: MGNLKSLVLLALLFSFSVAVFANTSNDATHDEVKPSTEATHAIEAQKHDGKPQIAEAQVEANDPVVEPQQDWGGRGGCRWGCCGGWWRGRCRYCCRSQAEASEVVETVEPNDVEPQQGGRGGGGGGGGGRGGCRWGCCGGWWRGRCRYCCRSQAEASEVVETVEPNDVEPQQGGRGGGGGGGGGRGGCRWGCCGGWWRGRCRYCCRSQAEASEVVETVEPNDVEPQQGGRGGGGGGGGGRGGCRWGCCGGWWRGRCRYCCRSQAEANEVVETVEAQQAKP.

The N-terminal stretch at 1-22 (MGNLKSLVLLALLFSFSVAVFA) is a signal peptide. Asn-23 is a glycosylation site (N-linked (GlcNAc...) asparagine). 2 repeat units span residues 76–97 (GGCR…CCRS) and 131–152 (GGCR…CCRS). The segment at 76–262 (GGCRWGCCGG…RGRCRYCCRS (187 aa)) is 4 X 22 AA repeats, Cys-rich. The segment at 163–184 (VEPNDVEPQQGGRGGGGGGGGG) is disordered. The span at 173 to 184 (GGRGGGGGGGGG) shows a compositional bias: gly residues. Copy 3 of the repeat occupies 186–207 (GGCRWGCCGGWWRGRCRYCCRS). The tract at residues 218–239 (VEPNDVEPQQGGRGGGGGGGGG) is disordered. Over residues 228 to 239 (GGRGGGGGGGGG) the composition is skewed to gly residues. Residues 241-262 (GGCRWGCCGGWWRGRCRYCCRS) form repeat 4.

May be involved in the acquisition of desiccation tolerance during late phase of embryogenesis. This chain is Late embryogenesis abundant protein M17, found in Arabidopsis thaliana (Mouse-ear cress).